The following is an 81-amino-acid chain: Defensin-like protein 266 (81 aa).

The N-terminal stretch at Met1–Ala26 is a signal peptide. Disulfide bonds link Cys40–Cys58, Cys46–Cys63, and Cys50–Cys65.

Belongs to the DEFL family.

It is found in the secreted. In Arabidopsis thaliana (Mouse-ear cress), this protein is Defensin-like protein 266.